Here is a 468-residue protein sequence, read N- to C-terminus: ATP synthase subunit beta (468 aa).

155-162 lines the ATP pocket; the sequence is GGAGVGKT.

It belongs to the ATPase alpha/beta chains family. F-type ATPases have 2 components, CF(1) - the catalytic core - and CF(0) - the membrane proton channel. CF(1) has five subunits: alpha(3), beta(3), gamma(1), delta(1), epsilon(1). CF(0) has three main subunits: a(1), b(2) and c(9-12). The alpha and beta chains form an alternating ring which encloses part of the gamma chain. CF(1) is attached to CF(0) by a central stalk formed by the gamma and epsilon chains, while a peripheral stalk is formed by the delta and b chains.

The protein resides in the cell inner membrane. The catalysed reaction is ATP + H2O + 4 H(+)(in) = ADP + phosphate + 5 H(+)(out). Produces ATP from ADP in the presence of a proton gradient across the membrane. The catalytic sites are hosted primarily by the beta subunits. The sequence is that of ATP synthase subunit beta from Leptospira biflexa serovar Patoc (strain Patoc 1 / ATCC 23582 / Paris).